Consider the following 793-residue polypeptide: Signal transducer and activator of transcription 5A (793 aa).

Tyr90 bears the Phosphotyrosine mark. Residue Ser128 is modified to Phosphoserine. Residues 589-686 (WNDGAILGFV…EVFAKYYTPV (98 aa)) enclose the SH2 domain. A phosphotyrosine mark is found at Tyr682 and Tyr694. The residue at position 779 (Ser779) is a Phosphoserine.

The protein belongs to the transcription factor STAT family. In terms of assembly, forms a homodimer or a heterodimer with a related family member. Interacts with NCOA1 and SOCS7. Binds NR3C1. Interacts with ERBB4. Interacts with EBF4. Interacts with CD69. In terms of processing, ISGylated. Post-translationally, tyrosine phosphorylated in response to KITLG/SCF, IL2, IL3, IL7, IL15, CSF2/GMCSF, GH1, PRL, EPO and THPO. Activated KIT promotes phosphorylation on tyrosine residues and subsequent translocation to the nucleus. Tyrosine phosphorylated in response to constitutively activated FGFR1, FGFR2, FGFR3 and FGFR4. Tyrosine phosphorylation is required for DNA-binding activity and dimerization. Serine phosphorylation is also required for maximal transcriptional activity. Tyrosine phosphorylated in response to signaling via activated FLT3; wild-type FLT3 results in much weaker phosphorylation than constitutively activated mutant FLT3. Alternatively, can be phosphorylated by JAK2 at Tyr-694. In terms of tissue distribution, in the virgin, found in most tissues except brain and muscle. During lactation, abundantly found in mammary tissue, as well as in other secretory organs such as salivary gland and seminal vesicle.

It localises to the cytoplasm. It is found in the nucleus. In terms of biological role, carries out a dual function: signal transduction and activation of transcription. Mediates cellular responses to the cytokine KITLG/SCF and other growth factors. May mediate cellular responses to activated FGFR1, FGFR2, FGFR3 and FGFR4. Binds to the GAS element and activates PRL-induced transcription. Regulates the expression of milk proteins during lactation. This is Signal transducer and activator of transcription 5A (Stat5a) from Mus musculus (Mouse).